The primary structure comprises 388 residues: Putative F-box protein At3g17490 (388 aa).

The F-box domain occupies 1–46; it reads MMMPHLSEDLVEEILSRVPAISLKRLRYTCKQWNALFNDQRFSKKH.

This Arabidopsis thaliana (Mouse-ear cress) protein is Putative F-box protein At3g17490.